Consider the following 508-residue polypeptide: Fasciclin-3 (508 aa).

Positions M1 to A20 are cleaved as a signal peptide. Q21 is modified (pyrrolidone carboxylic acid). Residues Q21 to D346 lie on the Extracellular side of the membrane. In terms of domain architecture, Ig-like V-type spans G44 to V106. Ig-like C2-type domains are found at residues P126 to P223 and A236 to L310. An intrachain disulfide couples C150 to C211. Residues N160, N257, and N300 are each glycosylated (N-linked (GlcNAc...) asparagine). Residues V347 to A370 traverse the membrane as a helical segment. The Cytoplasmic segment spans residues R371–K508. The segment at K381–K439 is disordered. Residue S382 is modified to Phosphoserine. 2 stretches are compositionally biased toward low complexity: residues A400–T409 and E425–Q437. S459 is subject to Phosphoserine.

As to expression, expressed on different subsets of axon bundles (fascicles) in insect embryos.

It localises to the membrane. Mediates cell adhesion in a Ca(2+)-independent manner. It plays a role in axon outgrowth, guidance and fasciculation of the developing nervous system. Function in neurons is essential for adult survival, and is important for climbing behavior and activity. In Drosophila melanogaster (Fruit fly), this protein is Fasciclin-3 (Fas3).